A 732-amino-acid polypeptide reads, in one-letter code: Catalase-peroxidase (732 aa).

Positions 1–21 (MSMAEMRCPFSGHGAATTPAS) are disordered. The N-terminal stretch at 1 to 22 (MSMAEMRCPFSGHGAATTPASA) is a signal peptide. The segment at residues 97 to 220 (WHSAGTYRLA…LAATEMGLIY (124 aa)) is a cross-link (tryptophyl-tyrosyl-methioninium (Trp-Tyr) (with M-246)). The active-site Proton acceptor is His-98. A cross-link (tryptophyl-tyrosyl-methioninium (Tyr-Met) (with W-97)) is located at residues 220–246 (YVNPEGPHGEPDPVASGREVRDTFARM). His-261 contributes to the heme b binding site.

It belongs to the peroxidase family. Peroxidase/catalase subfamily. As to quaternary structure, homodimer or homotetramer. Heme b serves as cofactor. Formation of the three residue Trp-Tyr-Met cross-link is important for the catalase, but not the peroxidase activity of the enzyme.

The catalysed reaction is H2O2 + AH2 = A + 2 H2O. It catalyses the reaction 2 H2O2 = O2 + 2 H2O. Bifunctional enzyme with both catalase and broad-spectrum peroxidase activity. In Synechococcus sp. (strain RCC307), this protein is Catalase-peroxidase.